The chain runs to 115 residues: MKLSLIIIATSLVIAVVAFPSKDSAATDFDKTESLENVEERVETALDERPRACSKNPGESCTNNCECCGATVVCASVYVAGVEKKSCKSKTSDNGFLNIIGQAANAVQNAASLCV.

A signal peptide spans 1-18 (MKLSLIIIATSLVIAVVA). Residues 19–51 (FPSKDSAATDFDKTESLENVEERVETALDERPR) constitute a propeptide that is removed on maturation.

This sequence belongs to the neurotoxin 25 family. F7 subfamily. In terms of processing, contains 4 disulfide bonds. Expressed by the venom gland.

The protein resides in the secreted. In Lycosa singoriensis (Wolf spider), this protein is Toxin-like structure LSTX-R1.